The following is a 132-amino-acid chain: MDIDLLWSFGGWFFILFPETINYCMAKLRSTSQISHFTNPRSCSSLFFVALLIITILITMLQSSTSMEVTSLPTHQPTSSNSHDESSTSSTATTTTDLHPKRTHHQSHPKPTRSFEAGAHEVPSGPNPISNR.

The signal sequence occupies residues 1–26 (MDIDLLWSFGGWFFILFPETINYCMA). Residues 42–62 (SCSSLFFVALLIITILITMLQ) form a helical membrane-spanning segment. Over residues 68–77 (EVTSLPTHQP) the composition is skewed to polar residues. A disordered region spans residues 68–132 (EVTSLPTHQP…PSGPNPISNR (65 aa)). A compositionally biased stretch (low complexity) spans 87 to 96 (STSSTATTTT). The segment covering 101–111 (KRTHHQSHPKP) has biased composition (basic residues). P123 and P126 each carry hydroxyproline. P126 is a glycosylation site (O-linked (Ara...) hydroxyproline).

Belongs to the CLV3/ESR signal peptide family. Interacts specifically with the leucine-rich repeat receptor-like protein kinase TDR. In terms of processing, the TDIFp peptide contains two hydroxprolines, but hydroxylation had no direct effect on TDIFp activity. The O-glycosylation (arabinosylation) of the hydroxyproline Pro-126 enhances binding affinity of the TDIFp peptide for its receptor.

The protein localises to the secreted. It localises to the extracellular space. Its subcellular location is the cell membrane. Its function is as follows. Extracellular signal peptide that regulates cell fate. Represses tracheary element differentiation but promotes the formation of procambial cells adjacent to phloem cells in the veins. The polypeptide is CLAVATA3/ESR (CLE)-related protein TDIF (Zinnia elegans (Garden zinnia)).